Consider the following 301-residue polypeptide: Putative S-adenosyl-L-methionine-dependent methyltransferase BCG_0775c (301 aa).

S-adenosyl-L-methionine is bound by residues Asp130 and 159–160 (DL).

Belongs to the UPF0677 family.

In terms of biological role, exhibits S-adenosyl-L-methionine-dependent methyltransferase activity. The chain is Putative S-adenosyl-L-methionine-dependent methyltransferase BCG_0775c from Mycobacterium bovis (strain BCG / Pasteur 1173P2).